Here is a 224-residue protein sequence, read N- to C-terminus: Thiamine-phosphate synthase (224 aa).

4-amino-2-methyl-5-(diphosphooxymethyl)pyrimidine-binding positions include 44–48 (QFREK) and N79. D80 and D99 together coordinate Mg(2+). Residue S117 coordinates 4-amino-2-methyl-5-(diphosphooxymethyl)pyrimidine. Position 143–145 (143–145 (TST)) interacts with 2-[(2R,5Z)-2-carboxy-4-methylthiazol-5(2H)-ylidene]ethyl phosphate. Residue K146 participates in 4-amino-2-methyl-5-(diphosphooxymethyl)pyrimidine binding. Residues G175 and 195 to 196 (IS) each bind 2-[(2R,5Z)-2-carboxy-4-methylthiazol-5(2H)-ylidene]ethyl phosphate.

Belongs to the thiamine-phosphate synthase family. The cofactor is Mg(2+).

The enzyme catalyses 2-[(2R,5Z)-2-carboxy-4-methylthiazol-5(2H)-ylidene]ethyl phosphate + 4-amino-2-methyl-5-(diphosphooxymethyl)pyrimidine + 2 H(+) = thiamine phosphate + CO2 + diphosphate. The catalysed reaction is 2-(2-carboxy-4-methylthiazol-5-yl)ethyl phosphate + 4-amino-2-methyl-5-(diphosphooxymethyl)pyrimidine + 2 H(+) = thiamine phosphate + CO2 + diphosphate. It catalyses the reaction 4-methyl-5-(2-phosphooxyethyl)-thiazole + 4-amino-2-methyl-5-(diphosphooxymethyl)pyrimidine + H(+) = thiamine phosphate + diphosphate. Its pathway is cofactor biosynthesis; thiamine diphosphate biosynthesis; thiamine phosphate from 4-amino-2-methyl-5-diphosphomethylpyrimidine and 4-methyl-5-(2-phosphoethyl)-thiazole: step 1/1. Functionally, condenses 4-methyl-5-(beta-hydroxyethyl)thiazole monophosphate (THZ-P) and 2-methyl-4-amino-5-hydroxymethyl pyrimidine pyrophosphate (HMP-PP) to form thiamine monophosphate (TMP). The sequence is that of Thiamine-phosphate synthase from Bacillus cereus (strain ATCC 10987 / NRS 248).